We begin with the raw amino-acid sequence, 239 residues long: LRRN4 C-terminal-like protein (239 aa).

An N-terminal signal peptide occupies residues M1–S19. Over Q20 to T194 the chain is Extracellular. Positions Q82–S179 constitute a Fibronectin type-III domain. N132 and N174 each carry an N-linked (GlcNAc...) asparagine glycan. Residues L195–V215 form a helical membrane-spanning segment. Over W216 to L239 the chain is Cytoplasmic.

It is found in the membrane. This chain is LRRN4 C-terminal-like protein (Lrrn4cl), found in Mus musculus (Mouse).